The following is a 178-amino-acid chain: PEST proteolytic signal-containing nuclear protein (178 aa).

A compositionally biased stretch (basic and acidic residues) spans 1 to 15 (MADGKAGEEKPEKPQ). The disordered stretch occupies residues 1–82 (MADGKAGEEK…FAIGSQTARK (82 aa)). Position 2 is an N-acetylalanine (alanine 2). A compositionally biased stretch (low complexity) spans 37–47 (SSSNGGESSSR). Serine 53 is modified (phosphoserine). Position 64 is an N6-acetyllysine (lysine 64). Phosphoserine is present on residues serine 77, serine 87, and serine 119. A disordered region spans residues 134–158 (NIGRDTPTSAGPNSFNKGKHGFSDN). Phosphothreonine is present on threonine 139. The span at 139-149 (TPTSAGPNSFN) shows a compositional bias: polar residues. At serine 147 the chain carries Phosphoserine. An N6-acetyllysine mark is found at lysine 150 and lysine 152.

As to quaternary structure, interacts with UHRF2/NIRF. In terms of processing, ubiquitinated; mediated by UHRF2 and leading to its subsequent proteasomal degradation. N-terminally acetylated in a HYPK-dependent manner by the NatA acetyltransferase complex which is composed of NAA10 and NAA15.

It is found in the nucleus. May be involved in cell cycle regulation. The polypeptide is PEST proteolytic signal-containing nuclear protein (Pcnp) (Mus musculus (Mouse)).